A 185-amino-acid polypeptide reads, in one-letter code: Protein GrpE (185 aa).

Belongs to the GrpE family. Homodimer.

Its subcellular location is the cytoplasm. Functionally, participates actively in the response to hyperosmotic and heat shock by preventing the aggregation of stress-denatured proteins, in association with DnaK and GrpE. It is the nucleotide exchange factor for DnaK and may function as a thermosensor. Unfolded proteins bind initially to DnaJ; upon interaction with the DnaJ-bound protein, DnaK hydrolyzes its bound ATP, resulting in the formation of a stable complex. GrpE releases ADP from DnaK; ATP binding to DnaK triggers the release of the substrate protein, thus completing the reaction cycle. Several rounds of ATP-dependent interactions between DnaJ, DnaK and GrpE are required for fully efficient folding. This is Protein GrpE from Methanobrevibacter smithii (strain ATCC 35061 / DSM 861 / OCM 144 / PS).